A 173-amino-acid chain; its full sequence is Small ribosomal subunit protein uS9 (173 aa).

Residues 20 to 53 are disordered; the sequence is SYTTESEVPVEGEYTSESVASRFGEPQPAAGLGR.

It belongs to the universal ribosomal protein uS9 family.

The sequence is that of Small ribosomal subunit protein uS9 from Streptomyces avermitilis (strain ATCC 31267 / DSM 46492 / JCM 5070 / NBRC 14893 / NCIMB 12804 / NRRL 8165 / MA-4680).